Consider the following 317-residue polypeptide: Large ribosomal subunit protein uL10z (317 aa).

The protein belongs to the universal ribosomal protein uL10 family. As to quaternary structure, P0 forms a pentameric complex by interaction with dimers of P1 and P2. Phosphorylated.

Ribosomal protein P0 is the functional equivalent of E.coli protein L10. This is Large ribosomal subunit protein uL10z (RPP0A) from Arabidopsis thaliana (Mouse-ear cress).